Consider the following 166-residue polypeptide: Large ribosomal subunit protein uL10 (166 aa).

The protein belongs to the universal ribosomal protein uL10 family. Part of the ribosomal stalk of the 50S ribosomal subunit. The N-terminus interacts with L11 and the large rRNA to form the base of the stalk. The C-terminus forms an elongated spine to which L12 dimers bind in a sequential fashion forming a multimeric L10(L12)X complex.

Functionally, forms part of the ribosomal stalk, playing a central role in the interaction of the ribosome with GTP-bound translation factors. This Shewanella denitrificans (strain OS217 / ATCC BAA-1090 / DSM 15013) protein is Large ribosomal subunit protein uL10.